Consider the following 133-residue polypeptide: Large ribosomal subunit protein uL15 (133 aa).

Positions 1 to 64 are disordered; it reads MGLENLKPAK…QPLQRRLPKI (64 aa).

This sequence belongs to the universal ribosomal protein uL15 family. Part of the 50S ribosomal subunit.

Its function is as follows. Binds to the 23S rRNA. This chain is Large ribosomal subunit protein uL15, found in Helicobacter pylori (strain G27).